We begin with the raw amino-acid sequence, 177 residues long: Large ribosomal subunit protein uL6 (177 aa).

It belongs to the universal ribosomal protein uL6 family. In terms of assembly, part of the 50S ribosomal subunit.

This protein binds to the 23S rRNA, and is important in its secondary structure. It is located near the subunit interface in the base of the L7/L12 stalk, and near the tRNA binding site of the peptidyltransferase center. This is Large ribosomal subunit protein uL6 from Rickettsia akari (strain Hartford).